A 259-amino-acid chain; its full sequence is NH(3)-dependent NAD(+) synthetase (259 aa).

33–40 (GLSGGIDS) is a binding site for ATP. D39 is a Mg(2+) binding site. Position 119 (R119) interacts with deamido-NAD(+). T139 provides a ligand contact to ATP. A Mg(2+)-binding site is contributed by E144. 2 residues coordinate deamido-NAD(+): K152 and D159. Residues K168 and S190 each contribute to the ATP site. A deamido-NAD(+)-binding site is contributed by 249–250 (HK).

Belongs to the NAD synthetase family. In terms of assembly, homodimer.

It catalyses the reaction deamido-NAD(+) + NH4(+) + ATP = AMP + diphosphate + NAD(+) + H(+). The protein operates within cofactor biosynthesis; NAD(+) biosynthesis; NAD(+) from deamido-NAD(+) (ammonia route): step 1/1. Catalyzes the ATP-dependent amidation of deamido-NAD to form NAD. Uses ammonia as a nitrogen source. The protein is NH(3)-dependent NAD(+) synthetase of Methanocaldococcus jannaschii (strain ATCC 43067 / DSM 2661 / JAL-1 / JCM 10045 / NBRC 100440) (Methanococcus jannaschii).